The sequence spans 272 residues: F-actin-capping protein subunit beta (272 aa).

Position 2 is an N-acetylserine (serine 2). A Phosphoserine modification is found at serine 2. Lysine 235 is subject to N6-acetyllysine. Valine 263 bears the Phosphoserine mark.

The protein belongs to the F-actin-capping protein beta subunit family. In terms of assembly, component of the F-actin capping complex, composed of a heterodimer of an alpha and a beta subunit. Subunit of dynactin, a multiprotein complex part of a tripartite complex with dynein and a adapter, such as BICDL1, BICD2 or HOOK3. The dynactin complex is built around ACTR1A/ACTB filament and consists of an actin-related filament composed of a shoulder domain, a pointed end and a barbed end. Its length is defined by its flexible shoulder domain. The soulder is composed of 2 DCTN1 subunits, 4 DCTN2 and 2 DCTN3. The 4 DCNT2 (via N-terminus) bind the ACTR1A filament and act as molecular rulers to determine the length. The pointed end is important for binding dynein-dynactin cargo adapters. Consists of 4 subunits: ACTR10, DCNT4, DCTN5 and DCTN6. The barbed end is composed of a CAPZA1:CAPZB heterodimers, which binds ACTR1A/ACTB filament and dynactin and stabilizes dynactin. Interacts with ARHGAP17. Interaction with RCSD1/CAPZIP. Component of the WASH complex, composed of F-actin-capping protein subunit alpha (CAPZA1, CAPZA2 or CAPZA3), F-actin-capping protein subunit beta (CAPZB), WASH (WASHC1, WASH2P, WASH3P, WASH4P, WASH5P or WASH6P), WASHC2 (WASHC2A or WASHC2C), WASHC3, WASHC4 and WASHC5. Interacts with ACTG1. Directly interacts with CRACD; this interaction decreases binding to actin.

It localises to the cytoplasm. Its subcellular location is the cytoskeleton. The protein resides in the myofibril. It is found in the sarcomere. In terms of biological role, F-actin-capping proteins bind in a Ca(2+)-independent manner to the fast growing ends of actin filaments (barbed end) thereby blocking the exchange of subunits at these ends. Unlike other capping proteins (such as gelsolin and severin), these proteins do not sever actin filaments. Plays a role in the regulation of cell morphology and cytoskeletal organization. Forms, with CAPZB, the barbed end of the fast growing ends of actin filaments in the dynactin complex and stabilizes dynactin structure. The dynactin multiprotein complex activates the molecular motor dynein for ultra-processive transport along microtubules. This is F-actin-capping protein subunit beta from Homo sapiens (Human).